Consider the following 95-residue polypeptide: Small ribosomal subunit protein bS20c (95 aa).

This sequence belongs to the bacterial ribosomal protein bS20 family.

It is found in the plastid. It localises to the cyanelle. Functionally, binds directly to 16S ribosomal RNA. This is Small ribosomal subunit protein bS20c (rps20) from Cyanophora paradoxa.